The primary structure comprises 414 residues: Gamma-glutamyl phosphate reductase (414 aa).

This sequence belongs to the gamma-glutamyl phosphate reductase family.

The protein resides in the cytoplasm. The catalysed reaction is L-glutamate 5-semialdehyde + phosphate + NADP(+) = L-glutamyl 5-phosphate + NADPH + H(+). It participates in amino-acid biosynthesis; L-proline biosynthesis; L-glutamate 5-semialdehyde from L-glutamate: step 2/2. Catalyzes the NADPH-dependent reduction of L-glutamate 5-phosphate into L-glutamate 5-semialdehyde and phosphate. The product spontaneously undergoes cyclization to form 1-pyrroline-5-carboxylate. In Xanthomonas campestris pv. campestris (strain 8004), this protein is Gamma-glutamyl phosphate reductase.